The chain runs to 117 residues: Small ribosomal subunit protein uS13 (117 aa).

The tract at residues 94 to 117 (SLPLRGQRTKTNARTRKGPRRLIK) is disordered.

It belongs to the universal ribosomal protein uS13 family. Part of the 30S ribosomal subunit. Forms a loose heterodimer with protein S19. Forms two bridges to the 50S subunit in the 70S ribosome.

Its function is as follows. Located at the top of the head of the 30S subunit, it contacts several helices of the 16S rRNA. In the 70S ribosome it contacts the 23S rRNA (bridge B1a) and protein L5 of the 50S subunit (bridge B1b), connecting the 2 subunits; these bridges are implicated in subunit movement. Contacts the tRNAs in the A and P-sites. The polypeptide is Small ribosomal subunit protein uS13 (Vesicomyosocius okutanii subsp. Calyptogena okutanii (strain HA)).